Here is a 233-residue protein sequence, read N- to C-terminus: Phosphatidylserine decarboxylase proenzyme (233 aa).

The active-site Schiff-base intermediate with substrate; via pyruvic acid is serine 188. Serine 188 carries the pyruvic acid (Ser); by autocatalysis modification.

This sequence belongs to the phosphatidylserine decarboxylase family. PSD-A subfamily. In terms of assembly, heterodimer of a large membrane-associated beta subunit and a small pyruvoyl-containing alpha subunit. The cofactor is pyruvate. Is synthesized initially as an inactive proenzyme. Formation of the active enzyme involves a self-maturation process in which the active site pyruvoyl group is generated from an internal serine residue via an autocatalytic post-translational modification. Two non-identical subunits are generated from the proenzyme in this reaction, and the pyruvate is formed at the N-terminus of the alpha chain, which is derived from the carboxyl end of the proenzyme. The post-translation cleavage follows an unusual pathway, termed non-hydrolytic serinolysis, in which the side chain hydroxyl group of the serine supplies its oxygen atom to form the C-terminus of the beta chain, while the remainder of the serine residue undergoes an oxidative deamination to produce ammonia and the pyruvoyl prosthetic group on the alpha chain.

The protein resides in the cell membrane. It catalyses the reaction a 1,2-diacyl-sn-glycero-3-phospho-L-serine + H(+) = a 1,2-diacyl-sn-glycero-3-phosphoethanolamine + CO2. The protein operates within phospholipid metabolism; phosphatidylethanolamine biosynthesis; phosphatidylethanolamine from CDP-diacylglycerol: step 2/2. Catalyzes the formation of phosphatidylethanolamine (PtdEtn) from phosphatidylserine (PtdSer). The sequence is that of Phosphatidylserine decarboxylase proenzyme from Ruegeria sp. (strain TM1040) (Silicibacter sp.).